The following is a 183-amino-acid chain: Cell division protein ZapC (183 aa).

Belongs to the ZapC family. As to quaternary structure, interacts directly with FtsZ.

It localises to the cytoplasm. In terms of biological role, contributes to the efficiency of the cell division process by stabilizing the polymeric form of the cell division protein FtsZ. Acts by promoting interactions between FtsZ protofilaments and suppressing the GTPase activity of FtsZ. This chain is Cell division protein ZapC, found in Proteus mirabilis (strain HI4320).